Here is a 94-residue protein sequence, read N- to C-terminus: Co-chaperonin GroES (94 aa).

Belongs to the GroES chaperonin family. As to quaternary structure, heptamer of 7 subunits arranged in a ring. Interacts with the chaperonin GroEL.

The protein localises to the cytoplasm. In terms of biological role, together with the chaperonin GroEL, plays an essential role in assisting protein folding. The GroEL-GroES system forms a nano-cage that allows encapsulation of the non-native substrate proteins and provides a physical environment optimized to promote and accelerate protein folding. GroES binds to the apical surface of the GroEL ring, thereby capping the opening of the GroEL channel. In Bacillus cytotoxicus (strain DSM 22905 / CIP 110041 / 391-98 / NVH 391-98), this protein is Co-chaperonin GroES.